Here is a 314-residue protein sequence, read N- to C-terminus: Dioxygenase easH (314 aa).

Fe cation contacts are provided by histidine 141, aspartate 143, and histidine 217.

It belongs to the PhyH family. In terms of assembly, homodimer. Fe cation serves as cofactor.

It functions in the pathway alkaloid biosynthesis; ergot alkaloid biosynthesis. Its function is as follows. Dioxygenase; part of the gene cluster that mediates the biosynthesis of fungal ergot alkaloid. DmaW catalyzes the first step of ergot alkaloid biosynthesis by condensing dimethylallyl diphosphate (DMAP) and tryptophan to form 4-dimethylallyl-L-tryptophan. The second step is catalyzed by the methyltransferase easF that methylates 4-dimethylallyl-L-tryptophan in the presence of S-adenosyl-L-methionine, resulting in the formation of 4-dimethylallyl-L-abrine. The catalase easC and the FAD-dependent oxidoreductase easE then transform 4-dimethylallyl-L-abrine to chanoclavine-I which is further oxidized by easD in the presence of NAD(+), resulting in the formation of chanoclavine-I aldehyde. Agroclavine dehydrogenase easG then mediates the conversion of chanoclavine-I aldehyde to agroclavine via a non-enzymatic adduct reaction: the substrate is an iminium intermediate that is formed spontaneously from chanoclavine-I aldehyde in the presence of glutathione. The presence of easA is not required to complete this reaction. Further conversion of agroclavine to paspalic acid is a two-step process involving oxidation of agroclavine to elymoclavine and of elymoclavine to paspalic acid, the second step being performed by the elymoclavine oxidase cloA. Paspalic acid is then further converted to D-lysergic acid. Ergopeptines are assembled from D-lysergic acid and three different amino acids by the D-lysergyl-peptide-synthetases composed each of a monomudular and a trimodular nonribosomal peptide synthetase subunit. LpsB and lpsC encode the monomodular subunits responsible for D-lysergic acid activation and incorporation into the ergopeptine backbone. LpsA1 and A2 subunits encode the trimodular nonribosomal peptide synthetase assembling the tripeptide portion of ergopeptines. LpsA1 is responsible for formation of the major ergopeptine, ergotamine, and lpsA2 for alpha-ergocryptine, the minor ergopeptine of the total alkaloid mixture elaborated by C.purpurea. D-lysergyl-tripeptides are assembled by the nonribosomal peptide synthetases and released as N-(D-lysergyl-aminoacyl)-lactams. Cyclolization of the D-lysergyl-tripeptides is performed by the Fe(2+)/2-ketoglutarate-dependent dioxygenase easH which introduces a hydroxyl group into N-(D-lysergyl-aminoacyl)-lactam at alpha-C of the aminoacyl residue followed by spontaneous condensation with the terminal lactam carbonyl group. The protein is Dioxygenase easH of Claviceps purpurea (strain 20.1) (Ergot fungus).